A 213-amino-acid chain; its full sequence is Orotate phosphoribosyltransferase (213 aa).

Lys26 lines the 5-phospho-alpha-D-ribose 1-diphosphate pocket. 34–35 (FF) lines the orotate pocket. Residues 72 to 73 (YK), Arg99, Lys100, Lys103, His105, and 124 to 132 (DDVITAGTA) each bind 5-phospho-alpha-D-ribose 1-diphosphate. Orotate is bound by residues Thr128 and Arg156.

The protein belongs to the purine/pyrimidine phosphoribosyltransferase family. PyrE subfamily. As to quaternary structure, homodimer. The cofactor is Mg(2+).

The enzyme catalyses orotidine 5'-phosphate + diphosphate = orotate + 5-phospho-alpha-D-ribose 1-diphosphate. It participates in pyrimidine metabolism; UMP biosynthesis via de novo pathway; UMP from orotate: step 1/2. Its function is as follows. Catalyzes the transfer of a ribosyl phosphate group from 5-phosphoribose 1-diphosphate to orotate, leading to the formation of orotidine monophosphate (OMP). The sequence is that of Orotate phosphoribosyltransferase from Erwinia tasmaniensis (strain DSM 17950 / CFBP 7177 / CIP 109463 / NCPPB 4357 / Et1/99).